The primary structure comprises 271 residues: 3-methyl-2-oxobutanoate hydroxymethyltransferase 2 (271 aa).

Residues Asp53 and Asp92 each contribute to the Mg(2+) site. 3-methyl-2-oxobutanoate-binding positions include 53–54 (DS), Asp92, and Lys120. Glu122 is a binding site for Mg(2+). Catalysis depends on Glu189, which acts as the Proton acceptor.

Belongs to the PanB family. As to quaternary structure, homodecamer; pentamer of dimers. The cofactor is Mg(2+).

It localises to the cytoplasm. It catalyses the reaction 3-methyl-2-oxobutanoate + (6R)-5,10-methylene-5,6,7,8-tetrahydrofolate + H2O = 2-dehydropantoate + (6S)-5,6,7,8-tetrahydrofolate. It participates in cofactor biosynthesis; (R)-pantothenate biosynthesis; (R)-pantoate from 3-methyl-2-oxobutanoate: step 1/2. Its function is as follows. Catalyzes the reversible reaction in which hydroxymethyl group from 5,10-methylenetetrahydrofolate is transferred onto alpha-ketoisovalerate to form ketopantoate. This is 3-methyl-2-oxobutanoate hydroxymethyltransferase 2 from Burkholderia lata (strain ATCC 17760 / DSM 23089 / LMG 22485 / NCIMB 9086 / R18194 / 383).